We begin with the raw amino-acid sequence, 136 residues long: Protein NrdI (136 aa).

The protein belongs to the NrdI family.

In terms of biological role, probably involved in ribonucleotide reductase function. The polypeptide is Protein NrdI (Salmonella paratyphi B (strain ATCC BAA-1250 / SPB7)).